Here is a 283-residue protein sequence, read N- to C-terminus: Phosphatidylserine decarboxylase proenzyme (283 aa).

Active-site charge relay system; for autoendoproteolytic cleavage activity residues include Asp96, His152, and Ser250. Ser250 functions as the Schiff-base intermediate with substrate; via pyruvic acid; for decarboxylase activity in the catalytic mechanism. Ser250 carries the pyruvic acid (Ser); by autocatalysis modification.

It belongs to the phosphatidylserine decarboxylase family. PSD-B subfamily. Prokaryotic type I sub-subfamily. In terms of assembly, heterodimer of a large membrane-associated beta subunit and a small pyruvoyl-containing alpha subunit. Pyruvate is required as a cofactor. Post-translationally, is synthesized initially as an inactive proenzyme. Formation of the active enzyme involves a self-maturation process in which the active site pyruvoyl group is generated from an internal serine residue via an autocatalytic post-translational modification. Two non-identical subunits are generated from the proenzyme in this reaction, and the pyruvate is formed at the N-terminus of the alpha chain, which is derived from the carboxyl end of the proenzyme. The autoendoproteolytic cleavage occurs by a canonical serine protease mechanism, in which the side chain hydroxyl group of the serine supplies its oxygen atom to form the C-terminus of the beta chain, while the remainder of the serine residue undergoes an oxidative deamination to produce ammonia and the pyruvoyl prosthetic group on the alpha chain. During this reaction, the Ser that is part of the protease active site of the proenzyme becomes the pyruvoyl prosthetic group, which constitutes an essential element of the active site of the mature decarboxylase.

The protein localises to the cell membrane. The catalysed reaction is a 1,2-diacyl-sn-glycero-3-phospho-L-serine + H(+) = a 1,2-diacyl-sn-glycero-3-phosphoethanolamine + CO2. The protein operates within phospholipid metabolism; phosphatidylethanolamine biosynthesis; phosphatidylethanolamine from CDP-diacylglycerol: step 2/2. Functionally, catalyzes the formation of phosphatidylethanolamine (PtdEtn) from phosphatidylserine (PtdSer). This is Phosphatidylserine decarboxylase proenzyme from Acinetobacter baumannii (strain SDF).